A 1283-amino-acid polypeptide reads, in one-letter code: 5-oxoprolinase PfmaA (1283 aa).

Positions 1256 to 1283 (NTPGGGAWGKPEGDADGYREEDQAGDGI) are disordered. Residues 1266-1277 (PEGDADGYREED) show a composition bias toward basic and acidic residues.

It belongs to the oxoprolinase family. As to quaternary structure, homodimer.

The catalysed reaction is 5-oxo-L-proline + ATP + 2 H2O = L-glutamate + ADP + phosphate + H(+). Its function is as follows. 5-oxoprolinase; part of the gene cluster that mediates the biosynthesis of dihydroxynaphthalene (DHN)-melanin, a bluish-green pigment forming a dark layer in the conidial wall that protects the conidia from UV radiations. The first step of the pathway is the production of the pentaketide 1,3,6,8-tetrahydroxynaphthalene (1,3,6,8-THN or T4HN) by the polyketide synthase PfmaE though condensation of acetyl-CoA with malonyl-CoA. T4HN is not stable and easily oxidizes into the stable form flaviolin. T4HN is also substrate of the hydroxynaphthalene reductase PfmaG to yield scytalone. The scytalone dehydratase PfmaJ then reduces scytalone to 1,3,8-THN. 1,3,8-THN is then substrate of the hydroxynaphthalene reductase PfmaI to yield vermelone. Vermelone is further converted by the multicopper oxidase PfmaD to 1,8-DHN. Finally the laccase PFICI_06862 transforms 1,8-DHN to DHN-melanin. The roles of the 5-oxoprolinase PfmaA and the proline iminopeptidase PfmaB within the cluster have not been elucidated yet. The protein is 5-oxoprolinase PfmaA of Pestalotiopsis fici (strain W106-1 / CGMCC3.15140).